The following is a 283-amino-acid chain: Urease accessory protein UreD (283 aa).

The protein belongs to the UreD family. As to quaternary structure, ureD, UreF and UreG form a complex that acts as a GTP-hydrolysis-dependent molecular chaperone, activating the urease apoprotein by helping to assemble the nickel containing metallocenter of UreC. The UreE protein probably delivers the nickel.

It is found in the cytoplasm. Functionally, required for maturation of urease via the functional incorporation of the urease nickel metallocenter. This is Urease accessory protein UreD from Acaryochloris marina (strain MBIC 11017).